Reading from the N-terminus, the 107-residue chain is MAYLFLFCAIFVEVVATTLLKSTEGFTRLVPTLACLAGYAVTFTLLALSISRGMKTDVAYALWSAIGTAAIVLIAVLFLDSPVSVAKVVGVALIIVGVITLNLADAH.

4 helical membrane-spanning segments follow: residues 2 to 19 (AYLF…ATTL), 29 to 51 (LVPT…LSIS), 58 to 77 (VAYA…IAVL), and 82 to 104 (PVSV…LNLA).

The protein belongs to the drug/metabolite transporter (DMT) superfamily. Small multidrug resistance (SMR) (TC 2.A.7.1) family. Mmr subfamily.

The protein resides in the cell membrane. Its function is as follows. Multidrug efflux pump. Confers resistance to tetraphenylphosphonium (TPP), erythromycin, ethidium bromide, acriflavine, safranin O and pyronin Y. This Mycobacterium leprae (strain TN) protein is Multidrug resistance protein mmr (mmr).